The primary structure comprises 282 residues: Pantothenate synthetase (282 aa).

30–37 is an ATP binding site; sequence MGFLHDGH. Residue histidine 37 is the Proton donor of the active site. Position 60 (glutamine 60) interacts with (R)-pantoate. Glutamine 60 is a beta-alanine binding site. 146–149 provides a ligand contact to ATP; it reads GQKD. Glutamine 152 contacts (R)-pantoate. ATP-binding positions include isoleucine 175 and 183–186; that span reads KSSR.

This sequence belongs to the pantothenate synthetase family. In terms of assembly, homodimer.

Its subcellular location is the cytoplasm. The catalysed reaction is (R)-pantoate + beta-alanine + ATP = (R)-pantothenate + AMP + diphosphate + H(+). It functions in the pathway cofactor biosynthesis; (R)-pantothenate biosynthesis; (R)-pantothenate from (R)-pantoate and beta-alanine: step 1/1. Catalyzes the condensation of pantoate with beta-alanine in an ATP-dependent reaction via a pantoyl-adenylate intermediate. The sequence is that of Pantothenate synthetase from Campylobacter jejuni (strain RM1221).